A 177-amino-acid polypeptide reads, in one-letter code: Transcription antitermination protein NusB (177 aa).

The interval 1-35 (MTDSANPTPSARPPRQPRTGTTGTGARKAGSKSGR) is disordered. A compositionally biased stretch (low complexity) spans 17–28 (PRTGTTGTGARK).

Belongs to the NusB family.

Functionally, involved in transcription antitermination. Required for transcription of ribosomal RNA (rRNA) genes. Binds specifically to the boxA antiterminator sequence of the ribosomal RNA (rrn) operons. This chain is Transcription antitermination protein NusB, found in Acidovorax ebreus (strain TPSY) (Diaphorobacter sp. (strain TPSY)).